The following is a 650-amino-acid chain: Protein kinase domain-containing protein ppk38 (650 aa).

The 283-residue stretch at 33 to 315 (VTVKRYLAEG…MRNVPIHIYD (283 aa)) folds into the Protein kinase domain. Disordered regions lie at residues 344–442 (IHQS…PTTP), 517–571 (KVAA…PTNM), and 591–616 (RRVS…EKPM). 2 stretches are compositionally biased toward polar residues: residues 369-415 (NVNS…NFRV) and 533-554 (SVEN…SSNA).

The polypeptide is Protein kinase domain-containing protein ppk38 (ppk38) (Schizosaccharomyces pombe (strain 972 / ATCC 24843) (Fission yeast)).